Reading from the N-terminus, the 475-residue chain is UDP-N-acetylmuramate--L-alanine ligase (475 aa).

112–118 (GTHGKTT) is a binding site for ATP.

This sequence belongs to the MurCDEF family.

The protein resides in the cytoplasm. It catalyses the reaction UDP-N-acetyl-alpha-D-muramate + L-alanine + ATP = UDP-N-acetyl-alpha-D-muramoyl-L-alanine + ADP + phosphate + H(+). It participates in cell wall biogenesis; peptidoglycan biosynthesis. Functionally, cell wall formation. The polypeptide is UDP-N-acetylmuramate--L-alanine ligase (Methylobacillus flagellatus (strain ATCC 51484 / DSM 6875 / VKM B-1610 / KT)).